Here is a 799-residue protein sequence, read N- to C-terminus: MDCSAPKEMNKPPTNILEATVPGHRDSPRAPRTSPEQDLPAAAPAAAVQPPRVPRSASTGAQTFQSADARACEAQRPGVGFCKLSSPQAQATSAALRDLSEGHSAQANPPSGAAGAGNALHCKIPALRGPEEDENVSVGKGTLEHNNTPAVGWVNMSQSTVVLGTDGIASVLPGSVATTTIPEDEQGDENKARGNWSSKLDFILSMVGYAVGLGNVWRFPYLAFQNGGGAFLIPYLMMLALAGLPIFFLEVSLGQFASQGPVSVWKAIPALQGCGIAMLIISVLIAIYYNVIICYTLFYLFASFVSVLPWGSCNNPWNTPECKDKTKLLLDSCVIGDHPKIQIKNSTFCMTAYPNLTMVNFTSQANKTFVSGSEEYFKYFVLKISAGIEYPGEIRWPLAFCLFLAWVIVYASLAKGIKTSGKVVYFTATFPYVVLVILLIRGVTLPGAGAGIWYFITPKWEKLTDATVWKDAATQIFFSLSAAWGGLITLSSYNKFHNNCYRDTLIVTCTNSATSIFAGFVIFSVIGFMANERKVNIENVADQGPGIAFVVYPEALTRLPLSPFWAIIFFLMLLTLGLDTMFATIETIVTSISDEFPKYLRTHKPVFTLGCCICFFIMGFPMITQGGIYMFQLVDTYAASYALVIIAIFELVGISYVYGLQRFCEDIEMMIGFQPNIFWKVCWAFVTPTILTFILCFSFYQWEPMTYGSYRYPNWSMVLGWLMLACSVIWIPIMFVIKMYLAPGRFIERLKLVCSPQPDWGPFLAQHRGERYKNMIDPLGTSSLGLKLPVKDLELGTQC.

The disordered stretch occupies residues 1-64 (MDCSAPKEMN…RSASTGAQTF (64 aa)). Topologically, residues 1–201 (MDCSAPKEMN…ARGNWSSKLD (201 aa)) are cytoplasmic. The span at 40–57 (PAAAPAAAVQPPRVPRSA) shows a compositional bias: low complexity. Ser58 bears the Phosphoserine mark. Thr59 carries the phosphothreonine modification. Ser86 is subject to Phosphoserine. Helical transmembrane passes span 202 to 222 (FILS…FPYL), 230 to 249 (AFLI…IFFL), and 273 to 293 (GCGI…NVII). Na(+) is bound by residues Gly208, Ala210, Val211, and Asn215. Topologically, residues 294–395 (CYTLFYLFAS…AGIEYPGEIR (102 aa)) are extracellular. Cys313 and Cys322 form a disulfide bridge. N-linked (GlcNAc...) asparagine glycans are attached at residues Asn345, Asn355, Asn360, and Asn366. Helical transmembrane passes span 396-414 (WPLA…ASLA), 423-440 (VVYF…ILLI), 476-493 (IFFS…LSSY), 505-526 (LIVT…FSVI), and 559-578 (LPLS…TLGL). Residues Ser479, Asn511, Leu576, and Asp579 each coordinate Na(+). 4 helical membrane-spanning segments follow: residues 606 to 624 (VFTL…PMIT), 640 to 660 (SYAL…VYGL), 681 to 700 (VCWA…FSFY), and 719 to 737 (LGWL…MFVI). Over 738–799 (KMYLAPGRFI…VKDLELGTQC (62 aa)) the chain is Cytoplasmic.

The protein belongs to the sodium:neurotransmitter symporter (SNF) (TC 2.A.22) family. SLC6A5 subfamily. N-glycosylated. As to expression, specifically expressed in spinal cord, brain stem, and to a lesser extent in the cerebellum.

The protein localises to the cell membrane. The catalysed reaction is glycine(out) + chloride(out) + 3 Na(+)(out) = glycine(in) + chloride(in) + 3 Na(+)(in). Its function is as follows. Sodium- and chloride-dependent glycine transporter. Terminates the action of glycine by its high affinity sodium-dependent reuptake into presynaptic terminals. May be responsible for the termination of neurotransmission at strychnine-sensitive glycinergic synapses. The sequence is that of Sodium- and chloride-dependent glycine transporter 2 (Slc6a5) from Rattus norvegicus (Rat).